A 111-amino-acid chain; its full sequence is Large ribosomal subunit protein eL34B (111 aa).

At Tyr76 the chain carries Phosphotyrosine.

This sequence belongs to the eukaryotic ribosomal protein eL34 family. In terms of assembly, component of the large ribosomal subunit (LSU). Mature yeast ribosomes consist of a small (40S) and a large (60S) subunit. The 40S small subunit contains 1 molecule of ribosomal RNA (18S rRNA) and at least 33 different proteins. The large 60S subunit contains 3 rRNA molecules (25S, 5.8S and 5S rRNA) and at least 46 different proteins.

It localises to the cytoplasm. The protein localises to the nucleus. The protein resides in the nucleolus. Functionally, component of the ribosome, a large ribonucleoprotein complex responsible for the synthesis of proteins in the cell. The small ribosomal subunit (SSU) binds messenger RNAs (mRNAs) and translates the encoded message by selecting cognate aminoacyl-transfer RNA (tRNA) molecules. The large subunit (LSU) contains the ribosomal catalytic site termed the peptidyl transferase center (PTC), which catalyzes the formation of peptide bonds, thereby polymerizing the amino acids delivered by tRNAs into a polypeptide chain. The nascent polypeptides leave the ribosome through a tunnel in the LSU and interact with protein factors that function in enzymatic processing, targeting, and the membrane insertion of nascent chains at the exit of the ribosomal tunnel. This Schizosaccharomyces pombe (strain 972 / ATCC 24843) (Fission yeast) protein is Large ribosomal subunit protein eL34B (rpl3402).